The primary structure comprises 351 residues: Adenine deaminase (351 aa).

Zn(2+) contacts are provided by H19, H21, and H208. Residue E211 is the Proton donor of the active site. D288 is a Zn(2+) binding site. D289 is a binding site for substrate.

Belongs to the metallo-dependent hydrolases superfamily. Adenosine and AMP deaminases family. Adenine deaminase type 2 subfamily. The cofactor is Zn(2+).

It is found in the cytoplasm. Its subcellular location is the nucleus. The enzyme catalyses adenine + H2O + H(+) = hypoxanthine + NH4(+). Its function is as follows. Catalyzes the hydrolytic deamination of adenine to hypoxanthine. Plays an important role in the purine salvage pathway and in nitrogen catabolism. The chain is Adenine deaminase (aah1) from Aspergillus oryzae (strain ATCC 42149 / RIB 40) (Yellow koji mold).